The chain runs to 249 residues: Phosphate import ATP-binding protein PstB (249 aa).

The ABC transporter domain maps to 4 to 244; the sequence is VKIKDLSLFY…PQDKRTEDYI (241 aa). Residue 36 to 43 coordinates ATP; it reads GPSGCGKS.

It belongs to the ABC transporter superfamily. Phosphate importer (TC 3.A.1.7) family. The complex is composed of two ATP-binding proteins (PstB), two transmembrane proteins (PstC and PstA) and a solute-binding protein (PstS).

It is found in the cell membrane. It catalyses the reaction phosphate(out) + ATP + H2O = ADP + 2 phosphate(in) + H(+). Its function is as follows. Part of the ABC transporter complex PstSACB involved in phosphate import. Responsible for energy coupling to the transport system. This chain is Phosphate import ATP-binding protein PstB, found in Clostridium tetani (strain Massachusetts / E88).